The primary structure comprises 237 residues: Uridylate kinase (237 aa).

Position 12–15 (12–15) interacts with ATP; that stretch reads KLSG. The tract at residues 20–25 is involved in allosteric activation by GTP; that stretch reads GEDGLG. Residue Gly-54 participates in UMP binding. Gly-55 and Arg-59 together coordinate ATP. UMP-binding positions include Asp-74 and 135–142; that span reads TGNPFFTT. Positions 162, 168, and 171 each coordinate ATP.

This sequence belongs to the UMP kinase family. As to quaternary structure, homohexamer.

Its subcellular location is the cytoplasm. The enzyme catalyses UMP + ATP = UDP + ADP. Its pathway is pyrimidine metabolism; CTP biosynthesis via de novo pathway; UDP from UMP (UMPK route): step 1/1. Allosterically activated by GTP. Inhibited by UTP. In terms of biological role, catalyzes the reversible phosphorylation of UMP to UDP. This Haemophilus influenzae (strain 86-028NP) protein is Uridylate kinase.